Reading from the N-terminus, the 313-residue chain is Non-structural protein 3 (313 aa).

Residues 1–149 (MLKMESTQQM…TRLMKDKIEG (149 aa)) are RNA-binding. Residues 150–206 (GEVEVDDSYVDEKMEIDTIDWKSRYDQLEKRFEALKQRVNEKYNTWVQKAKKVNENM) are dimerization. Residues 166 to 237 (DTIDWKSRYD…NKLEADLQGK (72 aa)) are a coiled coil. The interval 170–234 (WKSRYDQLEK…QYCNKLEADL (65 aa)) is interaction with host ZC3H7B. Positions 208–313 (SLQNVISQQQ…KQCNYEYAYE (106 aa)) are interaction with host EIF4G1.

Belongs to the rotavirus NSP3 family. In terms of assembly, homodimer. Interacts (via the coiled-coil region) with host ZC3H7B (via LD motif). Interacts with host EIF4G1.

The protein resides in the host cytoplasm. Functionally, plays an important role in stimulating the translation of viral mRNAs. These mRNAs are capped but not polyadenylated, instead terminating in a conserved sequence 'GACC' at the 3' that is recognized by NSP3, which competes with host PABPC1 for EIF4G1 binding. The interaction between NSP3 and host EIF4G1 stabilizes the EIF4E-EIF4G1 interaction, thereby facilitating the initiation of capped mRNA translation. This is Non-structural protein 3 from Homo sapiens (Human).